A 191-amino-acid polypeptide reads, in one-letter code: Lipid A acyltransferase PagP (191 aa).

Residues 1 to 26 (MLKVNKYVILIIAFVSQMMFSTTAQA) form the signal peptide. Active-site residues include histidine 63, aspartate 106, and serine 107.

The protein belongs to the lipid A palmitoyltransferase family. Homodimer.

The protein localises to the cell outer membrane. The enzyme catalyses a lipid A + a 1,2-diacyl-sn-glycero-3-phosphocholine = a hepta-acyl lipid A + a 2-acyl-sn-glycero-3-phosphocholine. It carries out the reaction a lipid IVA + a 1,2-diacyl-sn-glycero-3-phosphocholine = a lipid IVB + a 2-acyl-sn-glycero-3-phosphocholine. It catalyses the reaction a lipid IIA + a 1,2-diacyl-sn-glycero-3-phosphocholine = a lipid IIB + a 2-acyl-sn-glycero-3-phosphocholine. Its function is as follows. Transfers a fatty acid residue from the sn-1 position of a phospholipid to the N-linked hydroxyfatty acid chain on the proximal unit of lipid A or its precursors. This Enterobacter lignolyticus (strain SCF1) protein is Lipid A acyltransferase PagP.